The primary structure comprises 283 residues: ATP phosphoribosyltransferase (283 aa).

The protein belongs to the ATP phosphoribosyltransferase family. Long subfamily. Mg(2+) serves as cofactor.

The protein resides in the cytoplasm. It carries out the reaction 1-(5-phospho-beta-D-ribosyl)-ATP + diphosphate = 5-phospho-alpha-D-ribose 1-diphosphate + ATP. Its pathway is amino-acid biosynthesis; L-histidine biosynthesis; L-histidine from 5-phospho-alpha-D-ribose 1-diphosphate: step 1/9. With respect to regulation, feedback inhibited by histidine. Functionally, catalyzes the condensation of ATP and 5-phosphoribose 1-diphosphate to form N'-(5'-phosphoribosyl)-ATP (PR-ATP). Has a crucial role in the pathway because the rate of histidine biosynthesis seems to be controlled primarily by regulation of HisG enzymatic activity. This is ATP phosphoribosyltransferase from Nocardia farcinica (strain IFM 10152).